The primary structure comprises 322 residues: Ornithine carbamoyltransferase (322 aa).

Carbamoyl phosphate-binding positions include 67–70 (STRT), Q94, R118, and 145–148 (HPCQ). Residues N176, D240, and 244 to 245 (SM) contribute to the L-ornithine site. Residues 280-281 (CL) and R308 each bind carbamoyl phosphate.

It belongs to the aspartate/ornithine carbamoyltransferase superfamily. OTCase family.

It localises to the cytoplasm. It carries out the reaction carbamoyl phosphate + L-ornithine = L-citrulline + phosphate + H(+). The protein operates within amino-acid biosynthesis; L-arginine biosynthesis; L-arginine from L-ornithine and carbamoyl phosphate: step 1/3. Reversibly catalyzes the transfer of the carbamoyl group from carbamoyl phosphate (CP) to the N(epsilon) atom of ornithine (ORN) to produce L-citrulline. This Oceanobacillus iheyensis (strain DSM 14371 / CIP 107618 / JCM 11309 / KCTC 3954 / HTE831) protein is Ornithine carbamoyltransferase.